Reading from the N-terminus, the 440-residue chain is 3-phosphoshikimate 1-carboxyvinyltransferase (440 aa).

3-phosphoshikimate is bound by residues K19, S20, and R24. K19 provides a ligand contact to phosphoenolpyruvate. Phosphoenolpyruvate-binding residues include G92 and R121. 4 residues coordinate 3-phosphoshikimate: S166, Q168, D315, and K342. Q168 is a binding site for phosphoenolpyruvate. D315 serves as the catalytic Proton acceptor. R346 and R399 together coordinate phosphoenolpyruvate.

This sequence belongs to the EPSP synthase family. Monomer.

Its subcellular location is the cytoplasm. The catalysed reaction is 3-phosphoshikimate + phosphoenolpyruvate = 5-O-(1-carboxyvinyl)-3-phosphoshikimate + phosphate. It participates in metabolic intermediate biosynthesis; chorismate biosynthesis; chorismate from D-erythrose 4-phosphate and phosphoenolpyruvate: step 6/7. In terms of biological role, catalyzes the transfer of the enolpyruvyl moiety of phosphoenolpyruvate (PEP) to the 5-hydroxyl of shikimate-3-phosphate (S3P) to produce enolpyruvyl shikimate-3-phosphate and inorganic phosphate. The chain is 3-phosphoshikimate 1-carboxyvinyltransferase from Leptospira interrogans serogroup Icterohaemorrhagiae serovar Lai (strain 56601).